The chain runs to 574 residues: Acetolactate synthase large subunit (574 aa).

Glutamate 51 contributes to the thiamine diphosphate binding site. Residues arginine 153, histidine 261–arginine 282, and aspartate 304–asparagine 323 contribute to the FAD site. The tract at residues glutamine 397–serine 477 is thiamine pyrophosphate binding. Residues aspartate 448 and asparagine 475 each coordinate Mg(2+).

It belongs to the TPP enzyme family. Dimer of large and small chains. The cofactor is Mg(2+). Thiamine diphosphate serves as cofactor.

It catalyses the reaction 2 pyruvate + H(+) = (2S)-2-acetolactate + CO2. Its pathway is amino-acid biosynthesis; L-isoleucine biosynthesis; L-isoleucine from 2-oxobutanoate: step 1/4. It functions in the pathway amino-acid biosynthesis; L-valine biosynthesis; L-valine from pyruvate: step 1/4. This Buchnera aphidicola subsp. Schlechtendalia chinensis protein is Acetolactate synthase large subunit (ilvI).